The chain runs to 103 residues: Large ribosomal subunit protein bL21 (103 aa).

It belongs to the bacterial ribosomal protein bL21 family. Part of the 50S ribosomal subunit. Contacts protein L20.

Its function is as follows. This protein binds to 23S rRNA in the presence of protein L20. In Clostridium kluyveri (strain NBRC 12016), this protein is Large ribosomal subunit protein bL21.